The sequence spans 277 residues: 3-methyl-2-oxobutanoate hydroxymethyltransferase (277 aa).

Residues aspartate 43 and aspartate 82 each contribute to the Mg(2+) site. Residues 43 to 44 (DS), aspartate 82, and lysine 112 contribute to the 3-methyl-2-oxobutanoate site. Glutamate 114 contributes to the Mg(2+) binding site. Glutamate 181 acts as the Proton acceptor in catalysis.

The protein belongs to the PanB family. As to quaternary structure, homodecamer; pentamer of dimers. Mg(2+) is required as a cofactor.

It localises to the cytoplasm. It catalyses the reaction 3-methyl-2-oxobutanoate + (6R)-5,10-methylene-5,6,7,8-tetrahydrofolate + H2O = 2-dehydropantoate + (6S)-5,6,7,8-tetrahydrofolate. The protein operates within cofactor biosynthesis; (R)-pantothenate biosynthesis; (R)-pantoate from 3-methyl-2-oxobutanoate: step 1/2. Its function is as follows. Catalyzes the reversible reaction in which hydroxymethyl group from 5,10-methylenetetrahydrofolate is transferred onto alpha-ketoisovalerate to form ketopantoate. This is 3-methyl-2-oxobutanoate hydroxymethyltransferase from Listeria innocua serovar 6a (strain ATCC BAA-680 / CLIP 11262).